Consider the following 127-residue polypeptide: Large ribosomal subunit protein bL20 (127 aa).

This sequence belongs to the bacterial ribosomal protein bL20 family.

Functionally, binds directly to 23S ribosomal RNA and is necessary for the in vitro assembly process of the 50S ribosomal subunit. It is not involved in the protein synthesizing functions of that subunit. In Streptomyces coelicolor (strain ATCC BAA-471 / A3(2) / M145), this protein is Large ribosomal subunit protein bL20 (rplT).